The following is a 460-amino-acid chain: 3-isopropylmalate dehydratase large subunit (460 aa).

The [4Fe-4S] cluster site is built by Cys338, Cys398, and Cys401.

The protein belongs to the aconitase/IPM isomerase family. LeuC type 1 subfamily. Heterodimer of LeuC and LeuD. [4Fe-4S] cluster is required as a cofactor.

It carries out the reaction (2R,3S)-3-isopropylmalate = (2S)-2-isopropylmalate. The protein operates within amino-acid biosynthesis; L-leucine biosynthesis; L-leucine from 3-methyl-2-oxobutanoate: step 2/4. Functionally, catalyzes the isomerization between 2-isopropylmalate and 3-isopropylmalate, via the formation of 2-isopropylmaleate. The sequence is that of 3-isopropylmalate dehydratase large subunit from Streptococcus thermophilus (strain CNRZ 1066).